The primary structure comprises 213 residues: CASP-like protein 2A1 (213 aa).

The Cytoplasmic segment spans residues 1–41 (MSKMAEEKAAAVGGLGGAGAADAAQQQQLAAGEAAAARVRP). A helical membrane pass occupies residues 42-62 (VETLLRAAPLGLCVAAMTVML). The Extracellular portion of the chain corresponds to 63–83 (RNQQSNEYGAVAYSDLGGFKY). A helical transmembrane segment spans residues 84–104 (LVYANGLCAAYSLVSAFYTAV). Residues 105 to 113 (PRPATVSRS) lie on the Cytoplasmic side of the membrane. The chain crosses the membrane as a helical span at residues 114–134 (WLVFLLDQVFTYLILAAGAAA). Topologically, residues 135-166 (AELLYLAYNGDKEVTWSEACGVFGSFCRQART) are extracellular. A helical transmembrane segment spans residues 167-187 (SVAITFGTVLCFILLSLISSY). The Cytoplasmic segment spans residues 188–213 (RLFSAYEAPPSSALGSKGVEIAAYPR).

The protein belongs to the Casparian strip membrane proteins (CASP) family. Homodimer and heterodimers.

Its subcellular location is the cell membrane. The protein is CASP-like protein 2A1 of Zea mays (Maize).